The chain runs to 492 residues: Transmembrane protein 39B (492 aa).

Residues 1–53 (MGGRRGPNRTSYYRNPLCEPGSSGASGGGHSSSASVSSVRSRSRTTSGTGLSS) are disordered. A glycan (N-linked (GlcNAc...) asparagine) is linked at N8. Over residues 31–53 (SSSASVSSVRSRSRTTSGTGLSS) the composition is skewed to low complexity. 8 consecutive transmembrane segments (helical) span residues 77 to 97 (SILF…VHYI), 115 to 135 (TSLN…IVLG), 153 to 175 (SLFR…GWSL), 185 to 205 (TYSF…IPFL), 288 to 308 (EVLV…VWFV), 322 to 342 (LFLL…LPAS), 421 to 441 (ILNI…YSLM), and 447 to 467 (HQTI…FKLL).

The protein belongs to the TMEM39 family.

It localises to the endoplasmic reticulum membrane. May protect the cells against DNA damage caused by exposure to the cold-warming stress and facilitates tissue damage repair during the recovery phase. This Rattus norvegicus (Rat) protein is Transmembrane protein 39B.